We begin with the raw amino-acid sequence, 274 residues long: Copper chaperone for superoxide dismutase (274 aa).

In terms of domain architecture, HMA spans 11 to 74 (LCTLEFAVQM…LLEGTGRQAV (64 aa)). 2 residues coordinate Cu cation: C22 and C25. K76 is covalently cross-linked (Glycyl lysine isopeptide (Lys-Gly) (interchain with G-Cter in ubiquitin)). The tract at residues 88 to 234 (AAVAILGGPG…LACGIIARSA (147 aa)) is superoxide dismutase-like. The cysteines at positions 141 and 227 are disulfide-linked. Zn(2+) contacts are provided by H147, H155, H164, and D167. Glycyl lysine isopeptide (Lys-Gly) (interchain with G-Cter in ubiquitin) cross-links involve residues K189, K216, and K241. Residues C244 and C246 each coordinate Cu cation. S267 carries the phosphoserine modification.

This sequence in the C-terminal section; belongs to the Cu-Zn superoxide dismutase family. In terms of assembly, homodimer, and heterodimer with SOD1. Interacts with COMMD1. Interacts with XIAP/BIRC4. Interacts with SLC31A1(via C-terminal domain); this interaction is Cu(1+)-mediated. The heterodimer CCS:SOD1 interacts with SLC31A1; this heterotrimer is Cu(1+)-mediated and its maintenance is regulated through SOD1 activation. Requires Cu(2+) as cofactor. Zn(2+) serves as cofactor. In terms of processing, ubiquitinion by XIAP/BIRC4 leads to enhancement of its chaperone activity toward its physiologic target, SOD1, rather than proteasomal degradation. XIAP/BIRC4 preferentially ubiquitinates at Lys-241. As to expression, ubiquitous.

It is found in the cytoplasm. Its function is as follows. Delivers copper to copper zinc superoxide dismutase (SOD1). This is Copper chaperone for superoxide dismutase from Homo sapiens (Human).